The following is a 28-amino-acid chain: Ribosome-inactivating protein pleuturegin (28 aa).

This sequence belongs to the ribosome-inactivating protein family.

The catalysed reaction is Endohydrolysis of the N-glycosidic bond at one specific adenosine on the 28S rRNA.. In terms of biological role, inhibits protein synthesis in animal cells. Does not possess ribonuclease activity. The chain is Ribosome-inactivating protein pleuturegin from Pleurotus tuber-regium (King tuber oyster mushroom).